Here is a 298-residue protein sequence, read N- to C-terminus: Protein ABIL1 (298 aa).

The protein belongs to the ABI family. Binds SCAR2. In terms of tissue distribution, expressed in seedlings, roots, hypocotyls, cotyledons, leaves, stems, and flowers.

It is found in the cytoplasm. The protein resides in the cytoskeleton. Involved in regulation of actin and microtubule organization. Part of a WAVE complex that activates the Arp2/3 complex. This Arabidopsis thaliana (Mouse-ear cress) protein is Protein ABIL1 (ABIL1).